The chain runs to 443 residues: Xaa-Pro dipeptidase (443 aa).

Mn(2+) contacts are provided by Asp246, Asp257, His339, Glu384, and Glu423.

It belongs to the peptidase M24B family. Bacterial-type prolidase subfamily. Requires Mn(2+) as cofactor.

It carries out the reaction Xaa-L-Pro dipeptide + H2O = an L-alpha-amino acid + L-proline. Splits dipeptides with a prolyl residue in the C-terminal position. The polypeptide is Xaa-Pro dipeptidase (Escherichia fergusonii (strain ATCC 35469 / DSM 13698 / CCUG 18766 / IAM 14443 / JCM 21226 / LMG 7866 / NBRC 102419 / NCTC 12128 / CDC 0568-73)).